We begin with the raw amino-acid sequence, 297 residues long: Zinc finger protein 784 (297 aa).

Residues 1-12 show a composition bias toward pro residues; sequence MAAARPDPPIPS. The interval 1-39 is disordered; the sequence is MAAARPDPPIPSSPTRESPSPEPPDLVLVPDGRPVTPPG. Residue Ser13 is modified to Phosphoserine. C2H2-type zinc fingers lie at residues 64 to 86, 100 to 122, and 128 to 150; these read FHCA…EHGH, SRCH…YSLH, and YRCS…QHRH. Residues 149 to 175 are disordered; it reads RHGVEPGTSERLLPTTTTGQPNSRVAQ. Residues 162–173 are compositionally biased toward polar residues; sequence PTTTTGQPNSRV. 3 C2H2-type zinc fingers span residues 195 to 217, 223 to 245, and 251 to 273; these read FACR…ERVH, YHCS…ARIH, and FRCM…QRTH. A disordered region spans residues 268-297; sequence KHQRTHFHGPGSGVGESRGQLRSSSVSQES. The span at 287–297 shows a compositional bias: polar residues; the sequence is QLRSSSVSQES.

This sequence belongs to the krueppel C2H2-type zinc-finger protein family.

The protein localises to the nucleus. May be involved in transcriptional regulation. This chain is Zinc finger protein 784 (Znf784), found in Mus musculus (Mouse).